We begin with the raw amino-acid sequence, 460 residues long: Serine--tRNA ligase (460 aa).

Residues 43–66 (AEGDGLRQERNEVSSKIGELKQDG) show a composition bias toward basic and acidic residues. Positions 43 to 81 (AEGDGLRQERNEVSSKIGELKQDGKDEEAQEAIDRSQEL) are disordered. Residue 242 to 244 (TAE) participates in L-serine binding. Residues 273–275 (RRE) and Val289 contribute to the ATP site. Glu296 is an L-serine binding site. 369–372 (EVSS) lines the ATP pocket. Ser405 contacts L-serine.

Belongs to the class-II aminoacyl-tRNA synthetase family. Type-1 seryl-tRNA synthetase subfamily. In terms of assembly, homodimer. The tRNA molecule binds across the dimer.

The protein localises to the cytoplasm. The catalysed reaction is tRNA(Ser) + L-serine + ATP = L-seryl-tRNA(Ser) + AMP + diphosphate + H(+). It catalyses the reaction tRNA(Sec) + L-serine + ATP = L-seryl-tRNA(Sec) + AMP + diphosphate + H(+). It participates in aminoacyl-tRNA biosynthesis; selenocysteinyl-tRNA(Sec) biosynthesis; L-seryl-tRNA(Sec) from L-serine and tRNA(Sec): step 1/1. Functionally, catalyzes the attachment of serine to tRNA(Ser). Is also probably able to aminoacylate tRNA(Sec) with serine, to form the misacylated tRNA L-seryl-tRNA(Sec), which will be further converted into selenocysteinyl-tRNA(Sec). The protein is Serine--tRNA ligase (serS) of Haloarcula marismortui (strain ATCC 43049 / DSM 3752 / JCM 8966 / VKM B-1809) (Halobacterium marismortui).